The following is a 156-amino-acid chain: MARERIPITREGLEALRQEYEYLVKHRRPEIARVIQEAREHGDIRENAAYDAAKHDQAFIEGRIREIEELLKRVELIEQPTDGDRSVVRVGSTVTIEIDGEIETYTIVGAIEAKPSAGRISNESPVGRALLGHRAGEIVPIETPNGTLMARIIEVQ.

This sequence belongs to the GreA/GreB family.

Functionally, necessary for efficient RNA polymerase transcription elongation past template-encoded arresting sites. The arresting sites in DNA have the property of trapping a certain fraction of elongating RNA polymerases that pass through, resulting in locked ternary complexes. Cleavage of the nascent transcript by cleavage factors such as GreA or GreB allows the resumption of elongation from the new 3'terminus. GreA releases sequences of 2 to 3 nucleotides. This chain is Transcription elongation factor GreA, found in Thermomicrobium roseum (strain ATCC 27502 / DSM 5159 / P-2).